A 362-amino-acid chain; its full sequence is Chalcone synthase A (362 aa).

Cysteine 168 is an active-site residue.

Belongs to the thiolase-like superfamily. Chalcone/stilbene synthases family.

The catalysed reaction is (E)-4-coumaroyl-CoA + 3 malonyl-CoA + 3 H(+) = 2',4,4',6'-tetrahydroxychalcone + 3 CO2 + 4 CoA. It functions in the pathway secondary metabolite biosynthesis; flavonoid biosynthesis. In terms of biological role, the primary product of this enzyme is 4,2',4',6'-tetrahydroxychalcone (also termed naringenin-chalcone or chalcone) which can under specific conditions spontaneously isomerize into naringenin. This is Chalcone synthase A (CHSA) from Ipomoea trifida (Morning glory).